Reading from the N-terminus, the 169-residue chain is Disulfide bond formation protein B (169 aa).

Over 1 to 8 the chain is Cytoplasmic; the sequence is MRLSVRWV. A helical transmembrane segment spans residues 9–25; that stretch reads FFLGFFLCALMLAIAGY. Over 26 to 43 the chain is Periplasmic; that stretch reads FQFVENLEPCPLCILSRV. Residues cysteine 35 and cysteine 38 are joined by a disulfide bond. The chain crosses the membrane as a helical span at residues 44–60; it reads AVLAIGGVFLVAALHNP. Topologically, residues 61–67 are cytoplasmic; that stretch reads KSWGIKV. Residues 68–84 traverse the membrane as a helical segment; that stretch reads YALLGFVVTLIGIGITG. Over 85 to 141 the chain is Periplasmic; that stretch reads RHVWLQSLPADQVPACGPGLNFMLDNFPLTETLELVFRGSGECAEVQWSFLGLTIPG. A disulfide bond links cysteine 100 and cysteine 127. Residues 142 to 160 form a helical membrane-spanning segment; sequence WTLVAFLFLGVISLWQMGR. Residues 161–169 are Cytoplasmic-facing; the sequence is TGGGAGKLT.

The protein belongs to the DsbB family.

It localises to the cell inner membrane. Functionally, required for disulfide bond formation in some periplasmic proteins. Acts by oxidizing the DsbA protein. The polypeptide is Disulfide bond formation protein B (Nitrosococcus oceani (strain ATCC 19707 / BCRC 17464 / JCM 30415 / NCIMB 11848 / C-107)).